A 127-amino-acid chain; its full sequence is Large ribosomal subunit protein uL22 (127 aa).

This sequence belongs to the universal ribosomal protein uL22 family. As to quaternary structure, part of the 50S ribosomal subunit.

Its function is as follows. This protein binds specifically to 23S rRNA; its binding is stimulated by other ribosomal proteins, e.g. L4, L17, and L20. It is important during the early stages of 50S assembly. It makes multiple contacts with different domains of the 23S rRNA in the assembled 50S subunit and ribosome. Functionally, the globular domain of the protein is located near the polypeptide exit tunnel on the outside of the subunit, while an extended beta-hairpin is found that lines the wall of the exit tunnel in the center of the 70S ribosome. In Brucella suis (strain ATCC 23445 / NCTC 10510), this protein is Large ribosomal subunit protein uL22.